Here is a 283-residue protein sequence, read N- to C-terminus: Pantothenate synthetase (283 aa).

34-41 (MGALHDGH) provides a ligand contact to ATP. The active-site Proton donor is the His-41. Gln-65 is a (R)-pantoate binding site. Residue Gln-65 participates in beta-alanine binding. 152–155 (GSKD) provides a ligand contact to ATP. Gln-158 is a binding site for (R)-pantoate. Residues Val-181 and 189–192 (MSSR) each bind ATP.

This sequence belongs to the pantothenate synthetase family. As to quaternary structure, homodimer.

It is found in the cytoplasm. It carries out the reaction (R)-pantoate + beta-alanine + ATP = (R)-pantothenate + AMP + diphosphate + H(+). It functions in the pathway cofactor biosynthesis; (R)-pantothenate biosynthesis; (R)-pantothenate from (R)-pantoate and beta-alanine: step 1/1. In terms of biological role, catalyzes the condensation of pantoate with beta-alanine in an ATP-dependent reaction via a pantoyl-adenylate intermediate. The polypeptide is Pantothenate synthetase (Rhodopseudomonas palustris (strain ATCC BAA-98 / CGA009)).